Here is a 484-residue protein sequence, read N- to C-terminus: Regulatory protein ViaA (484 aa).

The protein belongs to the ViaA family. In terms of assembly, homodimer. Interacts with RavA.

The protein resides in the cytoplasm. Functionally, component of the RavA-ViaA chaperone complex, which may act on the membrane to optimize the function of some of the respiratory chains. ViaA stimulates the ATPase activity of RavA. The chain is Regulatory protein ViaA from Edwardsiella ictaluri (strain 93-146).